We begin with the raw amino-acid sequence, 313 residues long: WD repeat-containing protein 82-B (313 aa).

WD repeat units follow at residues 19–58 (ENSDKINCFDFSPTGETVISSSDDDSIVLYDCQEGKPKRT), 105–144 (GHSKRVVSLSMSPVDDTFISGSLDKTIRLWDLRSPNCQGL), 146–184 (HLQGKPVCSFDPEGLIFAAGINSEMVKLYDLRSFDKGPF), 192–231 (DRTCEWTALKFSNDGKLILLSTNGGFLRLVDAFKGAVMHT), 236–276 (NNSK…KVAV), and 280–313 (KHTGPITCLQFNPKFMTFASACSNMAFWLPTIDD).

It belongs to the WD repeat SWD2 family. In terms of assembly, component of the SET1/COMPASS complex. Component of the PNUTS-PP1 phosphatase complex.

The protein resides in the nucleus. It localises to the chromosome. Its subcellular location is the cytoplasm. Its function is as follows. Regulatory component of the SET1/COMPASS complex implicated in the tethering of this complex to transcriptional start sites of active genes. Facilitates histone H3 'Lys-4' methylation (H3K4me) via recruitment of the SETD1A or SETD1B to the 'Ser-5' phosphorylated C-terminal domain (CTD) of RNA polymerase II large subunit (POLR2A). Component of the PNUTS-PP1 protein phosphatase complex, a protein phosphatase 1 (PP1) complex that promotes RNA polymerase II transcription pause-release, allowing transcription elongation. The polypeptide is WD repeat-containing protein 82-B (wdr82-b) (Xenopus laevis (African clawed frog)).